The sequence spans 141 residues: Large ribosomal subunit protein uL11 (141 aa).

It belongs to the universal ribosomal protein uL11 family. Part of the ribosomal stalk of the 50S ribosomal subunit. Interacts with L10 and the large rRNA to form the base of the stalk. L10 forms an elongated spine to which L12 dimers bind in a sequential fashion forming a multimeric L10(L12)X complex. Post-translationally, one or more lysine residues are methylated.

Functionally, forms part of the ribosomal stalk which helps the ribosome interact with GTP-bound translation factors. In Geobacillus thermodenitrificans (strain NG80-2), this protein is Large ribosomal subunit protein uL11.